We begin with the raw amino-acid sequence, 173 residues long: Ribulose bisphosphate carboxylase small subunit, chloroplastic 1 (173 aa).

The transit peptide at Met1–Gln49 directs the protein to the chloroplast.

This sequence belongs to the RuBisCO small chain family. Heterohexadecamer of 8 large and 8 small subunits.

It localises to the plastid. Its subcellular location is the chloroplast. In terms of biological role, ruBisCO catalyzes two reactions: the carboxylation of D-ribulose 1,5-bisphosphate, the primary event in carbon dioxide fixation, as well as the oxidative fragmentation of the pentose substrate. Both reactions occur simultaneously and in competition at the same active site. Although the small subunit is not catalytic it is essential for maximal activity. The protein is Ribulose bisphosphate carboxylase small subunit, chloroplastic 1 of Flaveria pringlei.